Consider the following 602-residue polypeptide: MNQFYQSTTGGQQNNNNGNQFQQYQPQQQQQFQQYSPSNANNNNTTTTTTTSTSKKGKNKDNQSKQQQIQQQQIQQQQQQQQQQQQQIQQQSVDTPSSYNGDGSDDGSDTERENKKNRNRVNQNLASRNYRQRKKEYIKEIEEKLAVLALENDQLKKENINLKKGGGVEIMKPDPAFITMMMEAKQIIIQLDVAIKKNDERSLIYLLQLFHLSIEKRHTIVEREVEKMVHPYTQAKLAAMGYVPSLENPMISSISGPSSDGWWTMYISEAQITEEQAKAIKQLRSNHWKADIELRNEREKLDRSIKEFYLNRVMVFPTNERLNKSFATNLSLSDGPNPTSPNSSSVTQSTLVRPSPGLTLLNNLNEENNNSNNSSNSSNNNTTTNNNNNNSLTPTPNQNNNISNIAVNGTISVVNELGFSPINGNIDISEILEFTRKLEALKKNFVKQRTLMEDTHSALSSILTPKQEAMLLVRVHSSTRYDFANMEMLKNVWGSVIAKDTTSYPQPPTFSQQTQQLQQAQLQLQNQTKQQQQQLQNNNNNNNNNNNNNNSFNNSNNNNVQNNSSNPSTPGGNNDQQNIYYTSSPSIPSSPYNHHQQQPSRQ.

The span at 1-10 (MNQFYQSTTG) shows a compositional bias: polar residues. Positions 1 to 128 (MNQFYQSTTG…NRVNQNLASR (128 aa)) are disordered. Low complexity-rich tracts occupy residues 11 to 54 (GQQN…TSTS) and 66 to 102 (QQQIQQQQIQQQQQQQQQQQQQIQQQSVDTPSSYNGD). Positions 58-94 (KNKDNQSKQQQIQQQQIQQQQQQQQQQQQQIQQQSVD) form a coiled coil. Residues 113–176 (ENKKNRNRVN…GVEIMKPDPA (64 aa)) enclose the bZIP domain. A basic motif region spans residues 115-135 (KKNRNRVNQNLASRNYRQRKK). The tract at residues 138 to 145 (IKEIEEKL) is leucine-zipper. Disordered stretches follow at residues 328 to 401 (TNLS…QNNN) and 525 to 602 (QNQT…PSRQ). Composition is skewed to low complexity over residues 336-350 (PNPTSPNSSSVTQST), 358-401 (LTLL…QNNN), and 525-592 (QNQT…SSPY). A coiled-coil region spans residues 509–552 (TFSQQTQQLQQAQLQLQNQTKQQQQQLQNNNNNNNNNNNNNNSF). The segment covering 593 to 602 (NHHQQQPSRQ) has biased composition (polar residues).

It belongs to the bZIP family. As to quaternary structure, binds DNA as a dimer. Heterodimerizes with dimA; in vitro. Also able to form homodimer; in vitro.

It is found in the nucleus. Transcriptional regulator involved in DIF-1 signaling. DIF-1 (Differentiation Inducing Factor-1) is a signal molecule involved in the differentiation of pstO (prestalk-O) cells. May be a direct activator of ecmA. The chain is Basic-leucine zipper transcription factor B (dimB) from Dictyostelium discoideum (Social amoeba).